The sequence spans 722 residues: Ribosomal RNA large subunit methyltransferase K/L (722 aa).

Residues Ile-43–Leu-154 enclose the THUMP domain.

Belongs to the methyltransferase superfamily. RlmKL family.

Its subcellular location is the cytoplasm. It carries out the reaction guanosine(2445) in 23S rRNA + S-adenosyl-L-methionine = N(2)-methylguanosine(2445) in 23S rRNA + S-adenosyl-L-homocysteine + H(+). The enzyme catalyses guanosine(2069) in 23S rRNA + S-adenosyl-L-methionine = N(2)-methylguanosine(2069) in 23S rRNA + S-adenosyl-L-homocysteine + H(+). Functionally, specifically methylates the guanine in position 2445 (m2G2445) and the guanine in position 2069 (m7G2069) of 23S rRNA. This is Ribosomal RNA large subunit methyltransferase K/L from Magnetococcus marinus (strain ATCC BAA-1437 / JCM 17883 / MC-1).